Here is a 261-residue protein sequence, read N- to C-terminus: 5'-nucleotidase SurE (261 aa).

Residues Asp12, Asp13, Ser43, and Asn99 each contribute to the a divalent metal cation site.

Belongs to the SurE nucleotidase family. A divalent metal cation serves as cofactor.

It is found in the cytoplasm. It catalyses the reaction a ribonucleoside 5'-phosphate + H2O = a ribonucleoside + phosphate. Its function is as follows. Nucleotidase that shows phosphatase activity on nucleoside 5'-monophosphates. In Polynucleobacter asymbioticus (strain DSM 18221 / CIP 109841 / QLW-P1DMWA-1) (Polynucleobacter necessarius subsp. asymbioticus), this protein is 5'-nucleotidase SurE.